Reading from the N-terminus, the 331-residue chain is L-lactate dehydrogenase A chain (331 aa).

NAD(+) contacts are provided by residues 29 to 57 (GMVG…MEDK) and Arg-98. Arg-105, Asn-137, and Arg-168 together coordinate substrate. An NAD(+)-binding site is contributed by Asn-137. The active-site Proton acceptor is the His-192. Residue Thr-247 participates in substrate binding.

The protein belongs to the LDH/MDH superfamily. LDH family. As to quaternary structure, homotetramer.

The protein localises to the cytoplasm. It carries out the reaction (S)-lactate + NAD(+) = pyruvate + NADH + H(+). It participates in fermentation; pyruvate fermentation to lactate; (S)-lactate from pyruvate: step 1/1. Its function is as follows. Interconverts simultaneously and stereospecifically pyruvate and lactate with concomitant interconversion of NADH and NAD(+). The polypeptide is L-lactate dehydrogenase A chain (ldha) (Champsocephalus gunnari (Mackerel icefish)).